The following is a 255-amino-acid chain: Superoxide dismutase [Fe] 2, chloroplastic (255 aa).

The N-terminal 32 residues, 1-32 (MAAFASALRVLPSPPAAVPRRLRSREQRQGCR), are a transit peptide targeting the chloroplast. 4 residues coordinate Fe cation: His67, His119, Asp203, and His207.

Belongs to the iron/manganese superoxide dismutase family. Homodimer. Fe cation is required as a cofactor. As to expression, strongly expressed in the stems of the young seedlings, etiolated seedlings and embryogenic calli, but only minimally expressed in the leaves and the roots.

It is found in the plastid. Its subcellular location is the chloroplast. The catalysed reaction is 2 superoxide + 2 H(+) = H2O2 + O2. In terms of biological role, destroys superoxide anion radicals which are normally produced within the cells and which are toxic to biological systems. This is Superoxide dismutase [Fe] 2, chloroplastic from Oryza sativa subsp. japonica (Rice).